The chain runs to 395 residues: Elongation factor Tu (395 aa).

The 196-residue stretch at Lys-10–Glu-205 folds into the tr-type G domain. The tract at residues Gly-19–Thr-26 is G1. Gly-19–Thr-26 is a binding site for GTP. Thr-26 is a Mg(2+) binding site. The interval Gly-61 to Ala-65 is G2. The G3 stretch occupies residues Asp-82 to Gly-85. GTP contacts are provided by residues Asp-82–His-86 and Asn-137–Asp-140. Positions Asn-137 to Asp-140 are G4. The interval Ser-175–Leu-177 is G5.

This sequence belongs to the TRAFAC class translation factor GTPase superfamily. Classic translation factor GTPase family. EF-Tu/EF-1A subfamily. As to quaternary structure, monomer.

The protein resides in the cytoplasm. It catalyses the reaction GTP + H2O = GDP + phosphate + H(+). In terms of biological role, GTP hydrolase that promotes the GTP-dependent binding of aminoacyl-tRNA to the A-site of ribosomes during protein biosynthesis. The polypeptide is Elongation factor Tu (Solibacter usitatus (strain Ellin6076)).